The sequence spans 104 residues: N(4)-acetylcytidine amidohydrolase (104 aa).

In terms of domain architecture, ASCH spans methionine 7–isoleucine 93. Lysine 22 (proton acceptor) is an active-site residue. Catalysis depends on threonine 25, which acts as the Nucleophile. Glutamate 75 serves as the catalytic Proton donor.

This sequence belongs to the N(4)-acetylcytidine amidohydrolase family.

It carries out the reaction N(4)-acetylcytidine + H2O = cytidine + acetate + H(+). The catalysed reaction is N(4)-acetyl-2'-deoxycytidine + H2O = 2'-deoxycytidine + acetate + H(+). It catalyses the reaction N(4)-acetylcytosine + H2O = cytosine + acetate + H(+). Catalyzes the hydrolysis of N(4)-acetylcytidine (ac4C). The polypeptide is N(4)-acetylcytidine amidohydrolase (Vibrio vulnificus (strain CMCP6)).